A 731-amino-acid polypeptide reads, in one-letter code: 1,4-alpha-glucan branching enzyme GlgB (731 aa).

Residue aspartate 411 is the Nucleophile of the active site. The Proton donor role is filled by glutamate 464.

It belongs to the glycosyl hydrolase 13 family. GlgB subfamily. In terms of assembly, monomer.

The catalysed reaction is Transfers a segment of a (1-&gt;4)-alpha-D-glucan chain to a primary hydroxy group in a similar glucan chain.. Its pathway is glycan biosynthesis; glycogen biosynthesis. Its function is as follows. Catalyzes the formation of the alpha-1,6-glucosidic linkages in glycogen by scission of a 1,4-alpha-linked oligosaccharide from growing alpha-1,4-glucan chains and the subsequent attachment of the oligosaccharide to the alpha-1,6 position. This is 1,4-alpha-glucan branching enzyme GlgB from Mycobacterium bovis (strain ATCC BAA-935 / AF2122/97).